Reading from the N-terminus, the 227-residue chain is Testis expressed protein 56 (227 aa).

Expressed predominantly in the testis.

This chain is Testis expressed protein 56, found in Mus musculus (Mouse).